The following is a 260-amino-acid chain: Acetyl-coenzyme A carboxylase carboxyl transferase subunit alpha (260 aa).

Residues 1 to 235 (MSAYDKVMAA…SNKILHSINK (235 aa)) enclose the CoA carboxyltransferase C-terminal domain.

The protein belongs to the AccA family. Acetyl-CoA carboxylase is a heterohexamer composed of biotin carboxyl carrier protein (AccB), biotin carboxylase (AccC) and two subunits each of ACCase subunit alpha (AccA) and ACCase subunit beta (AccD).

It is found in the cytoplasm. The enzyme catalyses N(6)-carboxybiotinyl-L-lysyl-[protein] + acetyl-CoA = N(6)-biotinyl-L-lysyl-[protein] + malonyl-CoA. It participates in lipid metabolism; malonyl-CoA biosynthesis; malonyl-CoA from acetyl-CoA: step 1/1. Its function is as follows. Component of the acetyl coenzyme A carboxylase (ACC) complex. First, biotin carboxylase catalyzes the carboxylation of biotin on its carrier protein (BCCP) and then the CO(2) group is transferred by the carboxyltransferase to acetyl-CoA to form malonyl-CoA. The polypeptide is Acetyl-coenzyme A carboxylase carboxyl transferase subunit alpha (Ruminiclostridium cellulolyticum (strain ATCC 35319 / DSM 5812 / JCM 6584 / H10) (Clostridium cellulolyticum)).